The chain runs to 170 residues: Ecotin (170 aa).

A signal peptide spans 1–21; that stretch reads MNKASVVFSGLLMAVSASAIA. A disulfide bond links cysteine 78 and cysteine 115.

Belongs to the protease inhibitor I11 (ecotin) family. Homodimer.

It is found in the periplasm. General inhibitor of pancreatic serine proteases: inhibits chymotrypsin, trypsin, elastases, factor X, kallikrein as well as a variety of other proteases. In Serratia proteamaculans (strain 568), this protein is Ecotin.